A 343-amino-acid polypeptide reads, in one-letter code: tRNA N6-adenosine threonylcarbamoyltransferase (343 aa).

2 residues coordinate Fe cation: His-112 and His-116. Substrate is bound by residues 135–139 (LVSGG), Asp-168, Gly-181, and Asn-273. Asp-301 contributes to the Fe cation binding site.

This sequence belongs to the KAE1 / TsaD family. Fe(2+) serves as cofactor.

Its subcellular location is the cytoplasm. The enzyme catalyses L-threonylcarbamoyladenylate + adenosine(37) in tRNA = N(6)-L-threonylcarbamoyladenosine(37) in tRNA + AMP + H(+). In terms of biological role, required for the formation of a threonylcarbamoyl group on adenosine at position 37 (t(6)A37) in tRNAs that read codons beginning with adenine. Is involved in the transfer of the threonylcarbamoyl moiety of threonylcarbamoyl-AMP (TC-AMP) to the N6 group of A37, together with TsaE and TsaB. TsaD likely plays a direct catalytic role in this reaction. In Azoarcus sp. (strain BH72), this protein is tRNA N6-adenosine threonylcarbamoyltransferase.